The chain runs to 264 residues: NADH dehydrogenase [ubiquinone] iron-sulfur protein 3, mitochondrial (264 aa).

A mitochondrion-targeting transit peptide spans 1-36 (MAAAAVARLWWRGILGASALTRGTGRPSVLLLPVRR).

This sequence belongs to the complex I 30 kDa subunit family. Core subunit of respiratory chain NADH dehydrogenase (Complex I) which is composed of 45 different subunits. Interacts with NDUFAF3. Interacts with RAB5IF. Found in subcomplexes containing subunits NDUFS2, MT-ND1 and NDUFA13.

It is found in the mitochondrion inner membrane. It carries out the reaction a ubiquinone + NADH + 5 H(+)(in) = a ubiquinol + NAD(+) + 4 H(+)(out). Its function is as follows. Core subunit of the mitochondrial membrane respiratory chain NADH dehydrogenase (Complex I) which catalyzes electron transfer from NADH through the respiratory chain, using ubiquinone as an electron acceptor. Essential for the catalytic activity and assembly of complex I. This is NADH dehydrogenase [ubiquinone] iron-sulfur protein 3, mitochondrial (NDUFS3) from Homo sapiens (Human).